A 403-amino-acid chain; its full sequence is Phosphoglycerate kinase (403 aa).

Substrate contacts are provided by residues 21–23 (DFN), arginine 36, 59–62 (HLGR), arginine 119, and arginine 154. Residues lysine 207, glycine 299, glutamate 330, and 357–360 (GGDA) each bind ATP.

It belongs to the phosphoglycerate kinase family. Monomer.

It is found in the cytoplasm. The enzyme catalyses (2R)-3-phosphoglycerate + ATP = (2R)-3-phospho-glyceroyl phosphate + ADP. It functions in the pathway carbohydrate degradation; glycolysis; pyruvate from D-glyceraldehyde 3-phosphate: step 2/5. This chain is Phosphoglycerate kinase, found in Chlamydia trachomatis serovar A (strain ATCC VR-571B / DSM 19440 / HAR-13).